The sequence spans 61 residues: Small ribosomal subunit protein uS14 (61 aa).

Zn(2+)-binding residues include Cys-24, Cys-27, Cys-40, and Cys-43.

The protein belongs to the universal ribosomal protein uS14 family. Zinc-binding uS14 subfamily. As to quaternary structure, part of the 30S ribosomal subunit. Contacts proteins S3 and S10. Zn(2+) is required as a cofactor.

Its function is as follows. Binds 16S rRNA, required for the assembly of 30S particles and may also be responsible for determining the conformation of the 16S rRNA at the A site. This Rubrobacter xylanophilus (strain DSM 9941 / JCM 11954 / NBRC 16129 / PRD-1) protein is Small ribosomal subunit protein uS14.